A 203-amino-acid polypeptide reads, in one-letter code: MDHKIDLLQPALEAALAGKIQALVRDRGELTLTVTAADYLAVCTTLRDHAELKLEQLIDLCGLDYSSYKDGAGSPYTEGPRYCVVLHLLSVSKNWRLRLKVFCADDGLPVVPSVNEIWAAANWFEREAFDLYGIVFEGHADLRRILTDYGFIGHPFRKDFPTTGHVEMRYDAEQRRVIYQPVTIEPREITPRIIREDNYGGLH.

It belongs to the complex I 30 kDa subunit family. NDH-1 is composed of 14 different subunits. Subunits NuoB, C, D, E, F, and G constitute the peripheral sector of the complex.

It localises to the cell inner membrane. The catalysed reaction is a quinone + NADH + 5 H(+)(in) = a quinol + NAD(+) + 4 H(+)(out). NDH-1 shuttles electrons from NADH, via FMN and iron-sulfur (Fe-S) centers, to quinones in the respiratory chain. The immediate electron acceptor for the enzyme in this species is believed to be ubiquinone. Couples the redox reaction to proton translocation (for every two electrons transferred, four hydrogen ions are translocated across the cytoplasmic membrane), and thus conserves the redox energy in a proton gradient. This chain is NADH-quinone oxidoreductase subunit C, found in Methylibium petroleiphilum (strain ATCC BAA-1232 / LMG 22953 / PM1).